A 640-amino-acid polypeptide reads, in one-letter code: 1,4-alpha-glucan branching enzyme GlgB (640 aa).

Asp-317 functions as the Nucleophile in the catalytic mechanism. Glu-370 (proton donor) is an active-site residue.

The protein belongs to the glycosyl hydrolase 13 family. GlgB subfamily. In terms of assembly, monomer.

The catalysed reaction is Transfers a segment of a (1-&gt;4)-alpha-D-glucan chain to a primary hydroxy group in a similar glucan chain.. The protein operates within glycan biosynthesis; glycogen biosynthesis. In terms of biological role, catalyzes the formation of the alpha-1,6-glucosidic linkages in glycogen by scission of a 1,4-alpha-linked oligosaccharide from growing alpha-1,4-glucan chains and the subsequent attachment of the oligosaccharide to the alpha-1,6 position. The chain is 1,4-alpha-glucan branching enzyme GlgB from Nitratidesulfovibrio vulgaris (strain DP4) (Desulfovibrio vulgaris).